Consider the following 839-residue polypeptide: NT-3 growth factor receptor (839 aa).

Positions 1–31 are cleaved as a signal peptide; the sequence is MDVSLCPAKCSFWRIFLLGSVWLDYVGSVLA. 2 disulfides stabilise this stretch: cysteine 32–cysteine 38 and cysteine 36–cysteine 45. Residues 32-429 lie on the Extracellular side of the membrane; the sequence is CPANCVCSKT…TVTHKPEEDT (398 aa). 2 N-linked (GlcNAc...) asparagine glycosylation sites follow: asparagine 72 and asparagine 79. LRR repeat units follow at residues 104 to 125 and 128 to 149; these read GLQK…AFAK and HLRY…LFQT. N-linked (GlcNAc...) asparagine glycosylation is found at asparagine 133 and asparagine 163. Positions 160–209 constitute an LRRCT domain; sequence NFFNCSCDIRWMQLWQEQGEAKLNSQNLYCINADGSQLPLFRMNISQCDL. 2 cysteine pairs are disulfide-bonded: cysteine 164-cysteine 189 and cysteine 166-cysteine 207. 7 N-linked (GlcNAc...) asparagine glycosylation sites follow: asparagine 203, asparagine 218, asparagine 232, asparagine 259, asparagine 267, asparagine 272, and asparagine 294. Ig-like C2-type domains are found at residues 210-300 and 309-382; these read PEIS…VALT and SLEE…IAKN. An intrachain disulfide couples cysteine 231 to cysteine 284. Cysteine 320 and cysteine 362 are oxidised to a cystine. N-linked (GlcNAc...) asparagine glycosylation is found at asparagine 375 and asparagine 388. The helical transmembrane segment at 430-453 threads the bilayer; that stretch reads FGVSIAVGLAAFACVLLVVLFVMI. Residues 454–839 lie on the Cytoplasmic side of the membrane; that stretch reads NKYGRRSKFG…ATPIYLDILG (386 aa). Serine 493 is modified (phosphoserine). Tyrosine 516 carries the phosphotyrosine; by autocatalysis modification. The Protein kinase domain maps to 538 to 839; that stretch reads IVLKRELGEG…ATPIYLDILG (302 aa). Residues 544–552 and lysine 572 each bind ATP; that span reads LGEGAFGKV. Aspartate 679 acts as the Proton acceptor in catalysis. Tyrosine 705, tyrosine 709, and tyrosine 710 each carry phosphotyrosine; by autocatalysis.

The protein belongs to the protein kinase superfamily. Tyr protein kinase family. Insulin receptor subfamily. In terms of assembly, exists in a dynamic equilibrium between monomeric (low affinity) and dimeric (high affinity) structures. Binds SH2B2. Interacts with SQSTM1 and KIDINS220. Interacts with PTPRS. Interacts with MAPK8IP3/JIP3. Post-translationally, ligand-mediated auto-phosphorylation. Widely expressed but mainly in nervous tissue. Isoform 2 is expressed at higher levels in adult brain than in fetal brain.

It localises to the membrane. It carries out the reaction L-tyrosyl-[protein] + ATP = O-phospho-L-tyrosyl-[protein] + ADP + H(+). Receptor tyrosine kinase involved in nervous system and probably heart development. Upon binding of its ligand NTF3/neurotrophin-3, NTRK3 autophosphorylates and activates different signaling pathways, including the phosphatidylinositol 3-kinase/AKT and the MAPK pathways, that control cell survival and differentiation. The polypeptide is NT-3 growth factor receptor (NTRK3) (Homo sapiens (Human)).